Reading from the N-terminus, the 48-residue chain is Large ribosomal subunit protein bL32 (48 aa).

The interval 24-48 is disordered; it reads LPMPIKDKDGSYKMPHRVNPVTKEY.

The protein belongs to the bacterial ribosomal protein bL32 family.

This Campylobacter lari (strain RM2100 / D67 / ATCC BAA-1060) protein is Large ribosomal subunit protein bL32.